The following is a 118-amino-acid chain: MARVKRGVIARARHKKILKQAKGYYGARSRVYRVAFQAVIKAGQYAYRDRRQRKRQFRQLWIARINAAARQNGISYSKFINGLKKASVEIDRKILADIAVFDKVAFTALVEKAKAALA.

Belongs to the bacterial ribosomal protein bL20 family.

Functionally, binds directly to 23S ribosomal RNA and is necessary for the in vitro assembly process of the 50S ribosomal subunit. It is not involved in the protein synthesizing functions of that subunit. This Klebsiella pneumoniae (strain 342) protein is Large ribosomal subunit protein bL20.